Consider the following 610-residue polypeptide: Elongation factor 4 (610 aa).

In terms of domain architecture, tr-type G spans 13 to 195 (SHIRNFSIVA…AIVNRLPAPK (183 aa)). GTP is bound by residues 25–30 (DHGKST) and 142–145 (NKID).

Belongs to the TRAFAC class translation factor GTPase superfamily. Classic translation factor GTPase family. LepA subfamily.

Its subcellular location is the cell inner membrane. The catalysed reaction is GTP + H2O = GDP + phosphate + H(+). Required for accurate and efficient protein synthesis under certain stress conditions. May act as a fidelity factor of the translation reaction, by catalyzing a one-codon backward translocation of tRNAs on improperly translocated ribosomes. Back-translocation proceeds from a post-translocation (POST) complex to a pre-translocation (PRE) complex, thus giving elongation factor G a second chance to translocate the tRNAs correctly. Binds to ribosomes in a GTP-dependent manner. This chain is Elongation factor 4, found in Rhizobium leguminosarum bv. trifolii (strain WSM2304).